Consider the following 156-residue polypeptide: Transcription antitermination protein NusB (156 aa).

This sequence belongs to the NusB family.

Functionally, involved in transcription antitermination. Required for transcription of ribosomal RNA (rRNA) genes. Binds specifically to the boxA antiterminator sequence of the ribosomal RNA (rrn) operons. The polypeptide is Transcription antitermination protein NusB (Clostridium kluyveri (strain ATCC 8527 / DSM 555 / NBRC 12016 / NCIMB 10680 / K1)).